A 315-amino-acid polypeptide reads, in one-letter code: tRNA-dihydrouridine(16) synthase (315 aa).

Residues 7–9 (PME) and Gln68 each bind FMN. Cys98 (proton donor) is an active-site residue. Residues Lys139, 199 to 201 (NGE), and 223 to 224 (GR) contribute to the FMN site.

This sequence belongs to the Dus family. DusC subfamily. It depends on FMN as a cofactor.

It carries out the reaction 5,6-dihydrouridine(16) in tRNA + NADP(+) = uridine(16) in tRNA + NADPH + H(+). The enzyme catalyses 5,6-dihydrouridine(16) in tRNA + NAD(+) = uridine(16) in tRNA + NADH + H(+). Functionally, catalyzes the synthesis of 5,6-dihydrouridine (D), a modified base found in the D-loop of most tRNAs, via the reduction of the C5-C6 double bond in target uridines. Specifically modifies U16 in tRNAs. This Shewanella oneidensis (strain ATCC 700550 / JCM 31522 / CIP 106686 / LMG 19005 / NCIMB 14063 / MR-1) protein is tRNA-dihydrouridine(16) synthase.